Reading from the N-terminus, the 304-residue chain is Phospholipase A1 (304 aa).

An intrachain disulfide couples Cys-6 to Cys-90. N-linked (GlcNAc...) asparagine glycosylation occurs at Asn-61. Ser-140 functions as the Nucleophile in the catalytic mechanism. Asp-168 serves as the catalytic Charge relay system. Disulfide bonds link Cys-179–Cys-184 and Cys-222–Cys-231. His-233 serves as the catalytic Charge relay system. 3 disulfide bridges follow: Cys-248–Cys-272, Cys-249–Cys-297, and Cys-265–Cys-270.

The protein belongs to the AB hydrolase superfamily. Lipase family. In terms of tissue distribution, expressed by the venom gland.

Its subcellular location is the secreted. It catalyses the reaction a 1,2-diacyl-sn-glycero-3-phosphocholine + H2O = a 2-acyl-sn-glycero-3-phosphocholine + a fatty acid + H(+). Functionally, catalyzes the hydrolysis of phosphatidylcholine with phospholipase A1 activity. May act as an allergen and induce hemolytic activity. The polypeptide is Phospholipase A1 (Vespa velutina (Asian yellow-legged hornet)).